Consider the following 220-residue polypeptide: Deoxyribose-phosphate aldolase (220 aa).

Aspartate 89 functions as the Proton donor/acceptor in the catalytic mechanism. The active-site Schiff-base intermediate with acetaldehyde is the lysine 151. Lysine 180 functions as the Proton donor/acceptor in the catalytic mechanism.

It belongs to the DeoC/FbaB aldolase family. DeoC type 1 subfamily.

The protein localises to the cytoplasm. The enzyme catalyses 2-deoxy-D-ribose 5-phosphate = D-glyceraldehyde 3-phosphate + acetaldehyde. It functions in the pathway carbohydrate degradation; 2-deoxy-D-ribose 1-phosphate degradation; D-glyceraldehyde 3-phosphate and acetaldehyde from 2-deoxy-alpha-D-ribose 1-phosphate: step 2/2. Its function is as follows. Catalyzes a reversible aldol reaction between acetaldehyde and D-glyceraldehyde 3-phosphate to generate 2-deoxy-D-ribose 5-phosphate. The sequence is that of Deoxyribose-phosphate aldolase from Lactococcus lactis subsp. cremoris (strain SK11).